The primary structure comprises 66 residues: U-scoloptoxin(24)-Er2a (66 aa).

A signal peptide spans 1–23 (MVKPLHCLIGIVLFLAVLNAGNG). A disordered region spans residues 43-66 (SLFHGNQRKKRSEEKRFSDMEQTK). Residues 53-66 (RSEEKRFSDMEQTK) are compositionally biased toward basic and acidic residues.

Belongs to the scoloptoxin-24 family. Expressed by the venom gland.

The protein resides in the secreted. The polypeptide is U-scoloptoxin(24)-Er2a (Ethmostigmus rubripes (Giant centipede)).